Consider the following 505-residue polypeptide: MEKLQYELQGYLEIDRYRKQRFLYPLLFREYIYALAHDHGLNSSIFYEPTENLGYDNDNKSSSLIVKRLITRLHQQNHLIISVNDSRFVGPNRSFYSQTISEGFAGIMEIPFSMRLVPSLERIAKYQNLRSIHSIFPFLEDKLSHLYYVSDILIPHPIHLEILLQTLRTRIRDAPSLHLLRCFLHEHHNWNSLITPKKSTSIFSKENQRLFLFLYNSHVYECESVLVFLRKQSSHLRSISSLAFLERTHFYGKIKHLVVAPRNDSQRTLPLWFFKEPLMHYVRYQGKSIMASRCTNLLMKKWKYYLVNFWQCHFHLWSQPGGIHINELSNHSFYFLGYLSGVRLMPWVIRSQMLENSFMIDTAIKRFDTIVPIFPLIGSLVKAKFCNVSGYPISKSVWADSSDSDIIARFGWICRNLSHYHSGSSKKHSLCRIKYILRLSCARTLARKHKSTVRVICKRLGSKLLEEFLTEEQEIVSFIFRGTRLRSERIWYLDIIRINGLVPHS.

This sequence belongs to the intron maturase 2 family. MatK subfamily.

It localises to the plastid. The protein resides in the chloroplast. Usually encoded in the trnK tRNA gene intron. Probably assists in splicing its own and other chloroplast group II introns. The sequence is that of Maturase K from Nuphar advena (Common spatterdock).